Here is a 113-residue protein sequence, read N- to C-terminus: Integration host factor subunit alpha (113 aa).

The tract at residues 88–113 is disordered; it reads ALNGGVSDETEGADDDDDDEEGEGDE. The span at 95-113 shows a compositional bias: acidic residues; it reads DETEGADDDDDDEEGEGDE.

The protein belongs to the bacterial histone-like protein family. As to quaternary structure, heterodimer of an alpha and a beta chain.

Its function is as follows. This protein is one of the two subunits of integration host factor, a specific DNA-binding protein that functions in genetic recombination as well as in transcriptional and translational control. The protein is Integration host factor subunit alpha of Anaeromyxobacter dehalogenans (strain 2CP-C).